The following is an 82-amino-acid chain: Immediate early response 3-interacting protein 1 (82 aa).

Helical transmembrane passes span 2-22 and 62-82; these read AFTL…IAVL and VMRV…LLFG.

Belongs to the YOS1 family.

It localises to the endoplasmic reticulum membrane. Regulator of endoplasmic reticulum secretion that acts as a key determinant of brain size. Required for secretion of extracellular matrix proteins. Required for correct brain development by depositing sufficient extracellular matrix proteins for tissue integrity and the proliferation of neural progenitors. Acts as a regulator of the unfolded protein response (UPR). This is Immediate early response 3-interacting protein 1 from Bos taurus (Bovine).